A 285-amino-acid chain; its full sequence is Bifunctional protein FolD (285 aa).

NADP(+)-binding positions include 165–167 (GRS), Ser-190, and Ile-231.

Belongs to the tetrahydrofolate dehydrogenase/cyclohydrolase family. Homodimer.

It catalyses the reaction (6R)-5,10-methylene-5,6,7,8-tetrahydrofolate + NADP(+) = (6R)-5,10-methenyltetrahydrofolate + NADPH. The enzyme catalyses (6R)-5,10-methenyltetrahydrofolate + H2O = (6R)-10-formyltetrahydrofolate + H(+). Its pathway is one-carbon metabolism; tetrahydrofolate interconversion. Its function is as follows. Catalyzes the oxidation of 5,10-methylenetetrahydrofolate to 5,10-methenyltetrahydrofolate and then the hydrolysis of 5,10-methenyltetrahydrofolate to 10-formyltetrahydrofolate. The sequence is that of Bifunctional protein FolD from Alkaliphilus oremlandii (strain OhILAs) (Clostridium oremlandii (strain OhILAs)).